We begin with the raw amino-acid sequence, 306 residues long: Light-independent protochlorophyllide reductase iron-sulfur ATP-binding protein (306 aa).

The disordered stretch occupies residues 1-31; sequence MREAAGLEARGLKSPPILKGQDGEGSLQVHQ. ATP is bound by residues 50–55 and Lys-79; that span reads GIGKST. Ser-54 contributes to the Mg(2+) binding site. Residues Cys-135 and Cys-169 each contribute to the [4Fe-4S] cluster site. ATP is bound at residue 220-221; sequence NR.

This sequence belongs to the NifH/BchL/ChlL family. As to quaternary structure, homodimer. Protochlorophyllide reductase is composed of three subunits; BchL, BchN and BchB. [4Fe-4S] cluster serves as cofactor.

It catalyses the reaction chlorophyllide a + oxidized 2[4Fe-4S]-[ferredoxin] + 2 ADP + 2 phosphate = protochlorophyllide a + reduced 2[4Fe-4S]-[ferredoxin] + 2 ATP + 2 H2O. Its pathway is porphyrin-containing compound metabolism; bacteriochlorophyll biosynthesis (light-independent). Its function is as follows. Component of the dark-operative protochlorophyllide reductase (DPOR) that uses Mg-ATP and reduced ferredoxin to reduce ring D of protochlorophyllide (Pchlide) to form chlorophyllide a (Chlide). This reaction is light-independent. The L component serves as a unique electron donor to the NB-component of the complex, and binds Mg-ATP. The protein is Light-independent protochlorophyllide reductase iron-sulfur ATP-binding protein of Jannaschia sp. (strain CCS1).